A 688-amino-acid chain; its full sequence is Amino-acid acetyltransferase, mitochondrial (688 aa).

A mitochondrion-targeting transit peptide spans 1 to 45 (MSSRALTWPRTAKSSLLKQQTSSFVGQPKLGTPNCRSFSSTADRP). Disordered regions lie at residues 1-59 (MSSR…SKSY) and 96-119 (LKAQ…TVTQ). Polar residues-rich tracts occupy residues 12 to 25 (AKSS…SSFV), 34 to 57 (NCRS…SSSK), and 106 to 119 (TEPT…TVTQ). The N-acetyltransferase domain occupies 509–678 (NRPRLSLDDP…YEQVCRSIQP (170 aa)).

The protein belongs to the acetyltransferase family.

Its subcellular location is the mitochondrion. The enzyme catalyses L-glutamate + acetyl-CoA = N-acetyl-L-glutamate + CoA + H(+). It participates in amino-acid biosynthesis; L-arginine biosynthesis; N(2)-acetyl-L-ornithine from L-glutamate: step 1/4. N-acetylglutamate synthase involved in arginine biosynthesis. In Aspergillus flavus (strain ATCC 200026 / FGSC A1120 / IAM 13836 / NRRL 3357 / JCM 12722 / SRRC 167), this protein is Amino-acid acetyltransferase, mitochondrial (arg2).